Reading from the N-terminus, the 213-residue chain is ATP-dependent Clp protease proteolytic subunit (213 aa).

Residue Ser114 is the Nucleophile of the active site. Residue His139 is part of the active site.

This sequence belongs to the peptidase S14 family. As to quaternary structure, fourteen ClpP subunits assemble into 2 heptameric rings which stack back to back to give a disk-like structure with a central cavity, resembling the structure of eukaryotic proteasomes.

The protein localises to the cytoplasm. It catalyses the reaction Hydrolysis of proteins to small peptides in the presence of ATP and magnesium. alpha-casein is the usual test substrate. In the absence of ATP, only oligopeptides shorter than five residues are hydrolyzed (such as succinyl-Leu-Tyr-|-NHMec, and Leu-Tyr-Leu-|-Tyr-Trp, in which cleavage of the -Tyr-|-Leu- and -Tyr-|-Trp bonds also occurs).. Its function is as follows. Cleaves peptides in various proteins in a process that requires ATP hydrolysis. Has a chymotrypsin-like activity. Plays a major role in the degradation of misfolded proteins. The protein is ATP-dependent Clp protease proteolytic subunit of Pseudomonas putida (strain ATCC 47054 / DSM 6125 / CFBP 8728 / NCIMB 11950 / KT2440).